A 110-amino-acid chain; its full sequence is Insulin (110 aa).

The first 24 residues, 1-24, serve as a signal peptide directing secretion; sequence MALWMRLLPLLVLLALWGPDPASA. 3 cysteine pairs are disulfide-bonded: cysteine 31/cysteine 96, cysteine 43/cysteine 109, and cysteine 95/cysteine 100. A propeptide spans 57 to 87 (c peptide); that stretch reads EAEDLQVGQVELGGGPGAGSLQPLALEGSLQ.

Belongs to the insulin family. Heterodimer of a B chain and an A chain linked by two disulfide bonds.

It is found in the secreted. Its function is as follows. Insulin decreases blood glucose concentration. It increases cell permeability to monosaccharides, amino acids and fatty acids. It accelerates glycolysis, the pentose phosphate cycle, and glycogen synthesis in liver. This Pan troglodytes (Chimpanzee) protein is Insulin (INS).